A 212-amino-acid polypeptide reads, in one-letter code: ER lumen protein-retaining receptor 1 (212 aa).

The Lumenal portion of the chain corresponds to Met-1–Phe-4. Residues Arg-5–Trp-24 traverse the membrane as a helical segment. The Cytoplasmic segment spans residues Lys-25–Ile-32. Residues Ser-33–Phe-52 traverse the membrane as a helical segment. The interval Arg-47–Tyr-48 is interaction with the K-D-E-L motif on target proteins. At Thr-53–Leu-58 the chain is on the lumenal side. The helical transmembrane segment at Tyr-59–Tyr-79 threads the bilayer. The Cytoplasmic portion of the chain corresponds to Ser-80–Thr-92. A helical transmembrane segment spans residues Phe-93–Asn-110. The Lumenal portion of the chain corresponds to His-111–Leu-116. The helical transmembrane segment at Glu-117–Leu-135 threads the bilayer. Topologically, residues Phe-136–Ser-149 are cytoplasmic. Residues His-150–Trp-168 form a helical membrane-spanning segment. The interval Arg-159–Arg-169 is interaction with the K-D-E-L motif on target proteins. The Lumenal portion of the chain corresponds to Arg-169–Leu-178. The chain crosses the membrane as a helical span at residues Ile-179 to Ile-199. Topologically, residues Thr-200–Ala-212 are cytoplasmic. An important for recycling of cargo proteins with the sequence motif K-D-E-L from the Golgi to the endoplasmic reticulum region spans residues Lys-204–Lys-207. Ser-209 carries the post-translational modification Phosphoserine; by PKA.

This sequence belongs to the ERD2 family. Upon ligand binding the receptor oligomerizes and interacts with components of the transport machinery such as ARFGAP1 and ARF1. Phosphorylation by PKA at Ser-209 is required for endoplasmic reticulum retention function.

The protein resides in the golgi apparatus membrane. Its subcellular location is the cytoplasmic vesicle. It is found in the COPI-coated vesicle membrane. The protein localises to the endoplasmic reticulum membrane. It localises to the endoplasmic reticulum-Golgi intermediate compartment membrane. In terms of biological role, receptor for the C-terminal sequence motif K-D-E-L that is present on endoplasmic reticulum resident proteins and that mediates their recycling from the Golgi back to the endoplasmic reticulum. The protein is ER lumen protein-retaining receptor 1 (KDELR1) of Bos taurus (Bovine).